The chain runs to 447 residues: Argininosuccinate synthase (447 aa).

Residues 17 to 25 (AFSGGLDTS) and A43 each bind ATP. Y99 provides a ligand contact to L-citrulline. Residues G129 and T131 each coordinate ATP. L-aspartate is bound by residues T131, N135, and D136. N135 lines the L-citrulline pocket. Residue D136 coordinates ATP. L-citrulline is bound by residues R139 and S192. D194 lines the ATP pocket. The L-citrulline site is built by T201, E203, and E280.

The protein belongs to the argininosuccinate synthase family. Type 2 subfamily. As to quaternary structure, homotetramer.

The protein localises to the cytoplasm. The catalysed reaction is L-citrulline + L-aspartate + ATP = 2-(N(omega)-L-arginino)succinate + AMP + diphosphate + H(+). It functions in the pathway amino-acid biosynthesis; L-arginine biosynthesis; L-arginine from L-ornithine and carbamoyl phosphate: step 2/3. This Salmonella newport (strain SL254) protein is Argininosuccinate synthase.